A 126-amino-acid polypeptide reads, in one-letter code: Fluoride-specific ion channel FluC (126 aa).

Transmembrane regions (helical) follow at residues 4–24 (YLYI…VSGV), 35–55 (IGTF…TGLF), 67–87 (LLIL…MFES), and 100–120 (ALNI…GLAL). Residues Gly75 and Thr78 each contribute to the Na(+) site.

It belongs to the fluoride channel Fluc/FEX (TC 1.A.43) family.

Its subcellular location is the cell inner membrane. The catalysed reaction is fluoride(in) = fluoride(out). Na(+) is not transported, but it plays an essential structural role and its presence is essential for fluoride channel function. Functionally, fluoride-specific ion channel. Important for reducing fluoride concentration in the cell, thus reducing its toxicity. The chain is Fluoride-specific ion channel FluC from Maridesulfovibrio salexigens (strain ATCC 14822 / DSM 2638 / NCIMB 8403 / VKM B-1763) (Desulfovibrio salexigens).